The chain runs to 539 residues: Effector protein hopAB1 (539 aa).

Disordered regions lie at residues Met1–Gln93, Gln163–Gln220, Ala230–Leu249, and Arg315–Arg336. Residues Thr18 to Ser31 show a composition bias toward basic and acidic residues. Residues Ser181–Ser194 show a composition bias toward low complexity.

The protein belongs to the HopAB family.

The protein localises to the secreted. Functionally, effector protein that plays different roles depending on the species and plant cultivars that interact with the pathogen. Acts as a virulence determinant by enhancing the development of disease symptoms and bacterial growth. Acts as an avirulence factor by eliciting hypersensitive response (HR) and plant resistance. This is Effector protein hopAB1 (hopAB1) from Pseudomonas savastanoi pv. phaseolicola (strain 1448A / Race 6) (Pseudomonas syringae pv. phaseolicola (strain 1448A / Race 6)).